We begin with the raw amino-acid sequence, 358 residues long: GDSL esterase/lipase EXL5 (358 aa).

The N-terminal stretch at 1-21 is a signal peptide; the sequence is MFRKKMLVLALFSIYFLSIEA. N-linked (GlcNAc...) asparagine glycosylation occurs at Asn-24. Ser-36 (nucleophile) is an active-site residue. Residues Asp-333 and His-336 contribute to the active site.

Belongs to the 'GDSL' lipolytic enzyme family. Flower buds.

It is found in the secreted. This chain is GDSL esterase/lipase EXL5 (EXL5), found in Arabidopsis thaliana (Mouse-ear cress).